Reading from the N-terminus, the 414-residue chain is 2,3-diketo-5-methylthiopentyl-1-phosphate enolase (414 aa).

Residue K99 is the Proton acceptor of the active site. Residues K148, 174-177 (KDDE), H265, G338, and 360-361 (GG) contribute to the substrate site. K174, D176, and E177 together coordinate Mg(2+). K174 carries the post-translational modification N6-carboxylysine.

The protein belongs to the RuBisCO large chain family. Type IV subfamily. As to quaternary structure, homodimer. Mg(2+) is required as a cofactor.

It carries out the reaction 5-methylsulfanyl-2,3-dioxopentyl phosphate = 2-hydroxy-5-methylsulfanyl-3-oxopent-1-enyl phosphate. It functions in the pathway amino-acid biosynthesis; L-methionine biosynthesis via salvage pathway; L-methionine from S-methyl-5-thio-alpha-D-ribose 1-phosphate: step 3/6. In terms of biological role, catalyzes the enolization of 2,3-diketo-5-methylthiopentyl-1-phosphate (DK-MTP-1-P) into 2-hydroxy-3-keto-5-methylthiopentenyl-1-phosphate (HK-MTPenyl-1-P). The protein is 2,3-diketo-5-methylthiopentyl-1-phosphate enolase of Bacillus mycoides (strain KBAB4) (Bacillus weihenstephanensis).